A 1316-amino-acid polypeptide reads, in one-letter code: DNA-directed RNA polymerase subunit beta' (1316 aa).

Zn(2+)-binding residues include cysteine 60, cysteine 62, cysteine 75, and cysteine 78. Residues aspartate 535, aspartate 537, and aspartate 539 each contribute to the Mg(2+) site. Zn(2+) is bound by residues cysteine 891, cysteine 968, cysteine 975, and cysteine 978.

This sequence belongs to the RNA polymerase beta' chain family. As to quaternary structure, the RNAP catalytic core consists of 2 alpha, 1 beta, 1 beta' and 1 omega subunit. When a sigma factor is associated with the core the holoenzyme is formed, which can initiate transcription. Mg(2+) serves as cofactor. The cofactor is Zn(2+).

The catalysed reaction is RNA(n) + a ribonucleoside 5'-triphosphate = RNA(n+1) + diphosphate. DNA-dependent RNA polymerase catalyzes the transcription of DNA into RNA using the four ribonucleoside triphosphates as substrates. This is DNA-directed RNA polymerase subunit beta' from Mycobacterium avium (strain 104).